The following is a 328-amino-acid chain: MIERIWSGESPLWRLLLPLSWLYGLVSGLIRLCYKLGLKRAWRAPVPVVVVGNLTAGGNGKTPVVIWLVEQLQQRGVRVGVVSRGYGGKAESYPLLLSDDTTTAQAGDEPVLIYQRTGAPVAVSPVRSDAVKAILTQHPDMQIIVTDDGLQHYRLARDVEVVVIDGVRRFGNGWWLPAGPMRERAGRLKTVDTVIVNGGVPRSGEIPMHLAPGQAVNLRTGTRCDIAKLTHVVAMAGIGHPPRFFATLKMCGVNPEKCVPLADHQSLTHSDVCALLNSGQTLVMTEKDAVKCRAFAEDNWWYLPVDARFAGHEPEQLLAKLISLASGE.

Position 55–62 (55–62 (TAGGNGKT)) interacts with ATP.

Belongs to the LpxK family.

It catalyses the reaction a lipid A disaccharide + ATP = a lipid IVA + ADP + H(+). Its pathway is glycolipid biosynthesis; lipid IV(A) biosynthesis; lipid IV(A) from (3R)-3-hydroxytetradecanoyl-[acyl-carrier-protein] and UDP-N-acetyl-alpha-D-glucosamine: step 6/6. Functionally, transfers the gamma-phosphate of ATP to the 4'-position of a tetraacyldisaccharide 1-phosphate intermediate (termed DS-1-P) to form tetraacyldisaccharide 1,4'-bis-phosphate (lipid IVA). The polypeptide is Tetraacyldisaccharide 4'-kinase (Escherichia fergusonii (strain ATCC 35469 / DSM 13698 / CCUG 18766 / IAM 14443 / JCM 21226 / LMG 7866 / NBRC 102419 / NCTC 12128 / CDC 0568-73)).